The chain runs to 497 residues: UDP-N-acetylmuramoyl-L-alanyl-D-glutamate--2,6-diaminopimelate ligase (497 aa).

Ser33 provides a ligand contact to UDP-N-acetyl-alpha-D-muramoyl-L-alanyl-D-glutamate. ATP is bound at residue 119–125 (GTNGKTT). UDP-N-acetyl-alpha-D-muramoyl-L-alanyl-D-glutamate contacts are provided by residues 161–162 (TT), Ser188, Gln194, and Arg196. The residue at position 228 (Lys228) is an N6-carboxylysine. Residues Arg390, 414–417 (DNPR), Gly465, and Glu469 each bind meso-2,6-diaminopimelate. The Meso-diaminopimelate recognition motif signature appears at 414–417 (DNPR).

The protein belongs to the MurCDEF family. MurE subfamily. The cofactor is Mg(2+). In terms of processing, carboxylation is probably crucial for Mg(2+) binding and, consequently, for the gamma-phosphate positioning of ATP.

Its subcellular location is the cytoplasm. It carries out the reaction UDP-N-acetyl-alpha-D-muramoyl-L-alanyl-D-glutamate + meso-2,6-diaminopimelate + ATP = UDP-N-acetyl-alpha-D-muramoyl-L-alanyl-gamma-D-glutamyl-meso-2,6-diaminopimelate + ADP + phosphate + H(+). It participates in cell wall biogenesis; peptidoglycan biosynthesis. Its function is as follows. Catalyzes the addition of meso-diaminopimelic acid to the nucleotide precursor UDP-N-acetylmuramoyl-L-alanyl-D-glutamate (UMAG) in the biosynthesis of bacterial cell-wall peptidoglycan. This is UDP-N-acetylmuramoyl-L-alanyl-D-glutamate--2,6-diaminopimelate ligase from Synechococcus elongatus (strain ATCC 33912 / PCC 7942 / FACHB-805) (Anacystis nidulans R2).